Reading from the N-terminus, the 237-residue chain is Neurogenin-1 (237 aa).

The disordered stretch occupies residues 35–83 (LQQAASASGPPAPARRGAPNISRASEVPGAQDDEQERRRRRGRTRVRSE). A compositionally biased stretch (low complexity) spans 38 to 53 (AASASGPPAPARRGAP). Positions 92–144 (SRRVKANDRERNRMHNLNAALDALRSVLPSFPDDTKLTKIETLRFAYNYIWAL) constitute a bHLH domain. Residues 175 to 209 (GPPSPASDAESWGSGAAAASPLSDPSSPAASEDFT) form a disordered region. Over residues 180-207 (ASDAESWGSGAAAASPLSDPSSPAASED) the composition is skewed to low complexity.

Efficient DNA binding requires dimerization with another bHLH protein. Expression restricted to the embryonic nervous system.

It localises to the nucleus. Its function is as follows. Acts as a transcriptional regulator. Involved in the initiation of neuronal differentiation. Activates transcription by binding to the E box (5'-CANNTG-3'). Associates with chromatin to enhancer regulatory elements in genes encoding key transcriptional regulators of neurogenesis. The polypeptide is Neurogenin-1 (NEUROG1) (Homo sapiens (Human)).